The sequence spans 418 residues: Serine hydroxymethyltransferase (418 aa).

(6S)-5,6,7,8-tetrahydrofolate is bound by residues L121 and 125–127 (GHL). K230 bears the N6-(pyridoxal phosphate)lysine mark. 355–357 (SPF) is a binding site for (6S)-5,6,7,8-tetrahydrofolate.

The protein belongs to the SHMT family. Homodimer. Pyridoxal 5'-phosphate serves as cofactor.

The protein localises to the cytoplasm. It carries out the reaction (6R)-5,10-methylene-5,6,7,8-tetrahydrofolate + glycine + H2O = (6S)-5,6,7,8-tetrahydrofolate + L-serine. Its pathway is one-carbon metabolism; tetrahydrofolate interconversion. It functions in the pathway amino-acid biosynthesis; glycine biosynthesis; glycine from L-serine: step 1/1. Functionally, catalyzes the reversible interconversion of serine and glycine with tetrahydrofolate (THF) serving as the one-carbon carrier. This reaction serves as the major source of one-carbon groups required for the biosynthesis of purines, thymidylate, methionine, and other important biomolecules. Also exhibits THF-independent aldolase activity toward beta-hydroxyamino acids, producing glycine and aldehydes, via a retro-aldol mechanism. This chain is Serine hydroxymethyltransferase, found in Streptococcus pyogenes serotype M5 (strain Manfredo).